The sequence spans 448 residues: N-succinylarginine dihydrolase (448 aa).

Residues 19-28, asparagine 110, and 137-138 contribute to the substrate site; these read AGLSSGNIAS and HR. The active site involves glutamate 174. Arginine 216 contacts substrate. Histidine 252 is a catalytic residue. Aspartate 254 and asparagine 366 together coordinate substrate. The active-site Nucleophile is cysteine 372.

This sequence belongs to the succinylarginine dihydrolase family. In terms of assembly, homodimer.

The catalysed reaction is N(2)-succinyl-L-arginine + 2 H2O + 2 H(+) = N(2)-succinyl-L-ornithine + 2 NH4(+) + CO2. The protein operates within amino-acid degradation; L-arginine degradation via AST pathway; L-glutamate and succinate from L-arginine: step 2/5. Functionally, catalyzes the hydrolysis of N(2)-succinylarginine into N(2)-succinylornithine, ammonia and CO(2). The chain is N-succinylarginine dihydrolase from Legionella pneumophila (strain Lens).